Consider the following 491-residue polypeptide: Protein nucleotidyltransferase YdiU (491 aa).

The ATP site is built by Gly-88, Gly-90, Arg-91, Lys-111, Asp-123, Gly-124, Arg-174, and Arg-181. Residue Asp-250 is the Proton acceptor of the active site. Asn-251 and Asp-260 together coordinate Mg(2+). Asp-260 lines the ATP pocket.

This sequence belongs to the SELO family. Mg(2+) is required as a cofactor. The cofactor is Mn(2+).

It catalyses the reaction L-seryl-[protein] + ATP = 3-O-(5'-adenylyl)-L-seryl-[protein] + diphosphate. The enzyme catalyses L-threonyl-[protein] + ATP = 3-O-(5'-adenylyl)-L-threonyl-[protein] + diphosphate. The catalysed reaction is L-tyrosyl-[protein] + ATP = O-(5'-adenylyl)-L-tyrosyl-[protein] + diphosphate. It carries out the reaction L-histidyl-[protein] + UTP = N(tele)-(5'-uridylyl)-L-histidyl-[protein] + diphosphate. It catalyses the reaction L-seryl-[protein] + UTP = O-(5'-uridylyl)-L-seryl-[protein] + diphosphate. The enzyme catalyses L-tyrosyl-[protein] + UTP = O-(5'-uridylyl)-L-tyrosyl-[protein] + diphosphate. In terms of biological role, nucleotidyltransferase involved in the post-translational modification of proteins. It can catalyze the addition of adenosine monophosphate (AMP) or uridine monophosphate (UMP) to a protein, resulting in modifications known as AMPylation and UMPylation. This is Protein nucleotidyltransferase YdiU from Rhodopseudomonas palustris (strain BisB18).